We begin with the raw amino-acid sequence, 86 residues long: Anti-adapter protein IraP (86 aa).

The stretch at 1–36 (MKNLIAELLFKLAQKEEESKELCAQVEALEIIVTAM) forms a coiled coil.

This sequence belongs to the IraP family. Interacts with RssB.

It is found in the cytoplasm. Functionally, inhibits RpoS proteolysis by regulating RssB activity, thereby increasing the stability of the sigma stress factor RpoS especially during phosphate starvation, but also in stationary phase and during nitrogen starvation. Its effect on RpoS stability is due to its interaction with RssB, which probably blocks the interaction of RssB with RpoS, and the consequent delivery of the RssB-RpoS complex to the ClpXP protein degradation pathway. This chain is Anti-adapter protein IraP, found in Escherichia coli O127:H6 (strain E2348/69 / EPEC).